Reading from the N-terminus, the 130-residue chain is Fumarate reductase subunit C (130 aa).

3 helical membrane-spanning segments follow: residues 30 to 50 (EGTS…VFSL), 60 to 80 (FVSF…LFAA), and 110 to 130 (IKAL…VALL).

The protein belongs to the FrdC family. As to quaternary structure, part of an enzyme complex containing four subunits: a flavoprotein (FrdA), an iron-sulfur protein (FrdB), and two hydrophobic anchor proteins (FrdC and FrdD).

It localises to the cell inner membrane. Two distinct, membrane-bound, FAD-containing enzymes are responsible for the catalysis of fumarate and succinate interconversion; fumarate reductase is used in anaerobic growth, and succinate dehydrogenase is used in aerobic growth. Anchors the catalytic components of the fumarate reductase complex to the cell inner membrane, binds quinones. The protein is Fumarate reductase subunit C of Yersinia pestis bv. Antiqua (strain Angola).